Here is a 156-residue protein sequence, read N- to C-terminus: Oxidized purine nucleoside triphosphate hydrolase (156 aa).

Positions 3-132 (ASRLYTLVLV…WFPLLLQKKK (130 aa)) constitute a Nudix hydrolase domain. Thr8 contacts 2-oxo-dATP. Residues Thr8 and Lys23 each contribute to the 8-oxo-dGMP site. Positions 8 and 23 each coordinate 8-oxo-dGTP. N(6)-methyl-AMP-binding residues include Thr8 and Lys23. O(6)-methyl-dGMP is bound by residues Thr8 and Lys23. An 8-oxo-ATP-binding site is contributed by Phe27. Residues Asn33 and 35–38 (FGGK) each bind 2-oxo-dATP. Asn33 serves as a coordination point for 8-oxo-dGMP. Residues Asn33 and 35-38 (FGGK) each bind 8-oxo-dGTP. Residue Asn33 coordinates O(6)-methyl-dGMP. Residues 35 to 38 (FGGK) and Glu52 each bind 8-oxo-ATP. Mg(2+) is bound by residues Gly36, Glu52, Glu55, Glu56, and Glu100. The Nudix box motif lies at 37–58 (GKVQEGETIEDGARRELQEESG). Residue Glu56 participates in 8-oxo-ATP binding. 117 to 120 (WPDD) contacts 2-oxo-dATP. Residue 117-120 (WPDD) coordinates 8-oxo-dGMP. 117 to 120 (WPDD) serves as a coordination point for 8-oxo-dGTP. 117–120 (WPDD) contacts N(6)-methyl-AMP. 117-120 (WPDD) provides a ligand contact to O(6)-methyl-dGMP. Residue 117–120 (WPDD) participates in 8-oxo-ATP binding.

The protein belongs to the Nudix hydrolase family. In terms of assembly, monomer. Mg(2+) serves as cofactor. In terms of processing, the N-terminus is blocked. As to expression, widely expressed with highest expression in thymus, testis, embryo and proliferating blood lymphocytes.

It is found in the cytoplasm. The protein localises to the cytosol. The protein resides in the mitochondrion matrix. It localises to the nucleus. The catalysed reaction is 2-oxo-dATP + H2O = 2-oxo-dAMP + diphosphate + H(+). It catalyses the reaction 2-oxo-ATP + H2O = 2-oxo-AMP + diphosphate + H(+). It carries out the reaction 8-oxo-dGTP + H2O = 8-oxo-dGMP + diphosphate + H(+). The enzyme catalyses 8-oxo-dATP + H2O = 8-oxo-dAMP + diphosphate + H(+). The catalysed reaction is O(6)-methyl-dGTP + H2O = O(6)-methyl-dGMP + diphosphate + H(+). It catalyses the reaction N(6)-methyl-dATP + H2O = N(6)-methyl-dAMP + diphosphate + H(+). It carries out the reaction N(6)-methyl-ATP + H2O = N(6)-methyl-AMP + diphosphate + H(+). With respect to regulation, inhibited by 2-oxo-dADP and 8-oxo-dGDP. Its function is as follows. Oxidized purine nucleoside triphosphate hydrolase which is a prominent sanitizer of the oxidized nucleotide pool. Catalyzes the hydrolysis of 2-oxo-dATP (2-hydroxy-dATP) into 2-oxo-dAMP. Also has a significant hydrolase activity toward 2-oxo-ATP, 8-oxo-dGTP and 8-oxo-dATP. Through the hydrolysis of oxidized purine nucleoside triphosphates, prevents their incorporation into DNA and the subsequent transversions A:T to C:G and G:C to T:A. Also catalyzes the hydrolysis of methylated purine nucleoside triphosphate preventing their integration into DNA. Through this antimutagenic activity protects cells from oxidative stress. The polypeptide is Oxidized purine nucleoside triphosphate hydrolase (NUDT1) (Homo sapiens (Human)).